A 231-amino-acid polypeptide reads, in one-letter code: Large ribosomal subunit protein uL1 (231 aa).

The protein belongs to the universal ribosomal protein uL1 family. As to quaternary structure, part of the 50S ribosomal subunit.

Binds directly to 23S rRNA. The L1 stalk is quite mobile in the ribosome, and is involved in E site tRNA release. In terms of biological role, protein L1 is also a translational repressor protein, it controls the translation of the L11 operon by binding to its mRNA. In Pseudomonas fluorescens (strain Pf0-1), this protein is Large ribosomal subunit protein uL1.